Consider the following 138-residue polypeptide: von Willebrand factor C domain-containing protein 2-like (138 aa).

Positions 1–21 (MALHIHEACILLLVIPGLVTS) are cleaved as a signal peptide. Residues 51–110 (KGCVDDSGFVYKLGERFFPGHSNCPCVCALDGPVCDQPECPKIHPKCTKVEHNGCCPECK) form the VWFC domain.

Peripherally associated with AMPAR complex. AMPAR complex consists of an inner core made of 4 pore-forming GluA/GRIA proteins (GRIA1, GRIA2, GRIA3 and GRIA4) and 4 major auxiliary subunits arranged in a twofold symmetry. One of the two pairs of distinct binding sites is occupied either by CNIH2, CNIH3 or CACNG2, CACNG3. The other harbors CACNG2, CACNG3, CACNG4, CACNG8 or GSG1L. This inner core of AMPAR complex is complemented by outer core constituents binding directly to the GluA/GRIA proteins at sites distinct from the interaction sites of the inner core constituents. Outer core constituents include at least PRRT1, PRRT2, CKAMP44/SHISA9, FRRS1L and NRN1. The proteins of the inner and outer core serve as a platform for other, more peripherally associated AMPAR constituents, including VWC2L. Alone or in combination, these auxiliary subunits control the gating and pharmacology of the AMPAR complex and profoundly impact their biogenesis and protein processing.

Its subcellular location is the secreted. It localises to the synapse. In terms of biological role, may play a role in neurogenesis. May play a role in bone differentiation and matrix mineralization. The sequence is that of von Willebrand factor C domain-containing protein 2-like (VWC2L) from Macaca fascicularis (Crab-eating macaque).